Reading from the N-terminus, the 743-residue chain is Dolichyl-phosphooligosaccharide-protein glycotransferase 2 (743 aa).

Residues 1-7 (MKIDKRL) are Cytoplasmic-facing. The helical transmembrane segment at 8 to 28 (MVIVAIATLFRMIPFRLKYLV) threads the bilayer. The short motif at 29-31 (GSD) is the DXD motif 1 element. Residues 29-91 (GSDPYFHLAY…FSFLGISLYT (63 aa)) lie on the Extracellular side of the membrane. A Mn(2+)-binding site is contributed by aspartate 31. A helical membrane pass occupies residues 92 to 112 (AFRVTPVIFGVLTVVFFYLSL). Topologically, residues 113–119 (KKLYNRD) are cytoplasmic. Residues 120-140 (VAFIVGLFLGVNYGHIFRSMA) form a helical membrane-spanning segment. Over 141–144 (NYYR) the chain is Extracellular. Residues arginine 144 and aspartate 146 each contribute to the Mn(2+) site. The DXD motif 2 motif lies at 144-146 (RGD). Residues 145-165 (GDNYMLFWYSVALLGIALGLK) form a helical membrane-spanning segment. Residues 166–170 (TRSKY) lie on the Cytoplasmic side of the membrane. Helical transmembrane passes span 171-191 (RYLF…FWQA) and 192-212 (YYPI…YAYL). Residues 213–216 (KSPK) lie on the Cytoplasmic side of the membrane. A helical membrane pass occupies residues 217–237 (LFLDSILIVLSTGLGVLIANI). The Extracellular portion of the chain corresponds to 238-272 (LGDKVGYGMLGYTDWMGKKVAETFGLEFGFIKDAY). A helical transmembrane segment spans residues 273–293 (LLIHVKYLLPLSLVFLGFLII). At 294–302 (TKKLNPKIK) the chain is on the cytoplasmic side. A helical transmembrane segment spans residues 303 to 323 (VGVLVGGSILAFIVMLVKFPA). Over 324 to 345 (LKDLSTGFGTFREVPISETLPP) the chain is Extracellular. Positions 333 to 336 (TFRE) match the TIXE motif motif. A helical membrane pass occupies residues 346 to 366 (TLDDLWRAYNIAIFLAALYIL). Residues 367-373 (RLRKIRS) lie on the Cytoplasmic side of the membrane. The helical transmembrane segment at 374–391 (GDAILLGYVITSLWMLRY) threads the bilayer. The Extracellular portion of the chain corresponds to 392 to 394 (WTR). Arginine 394 contributes to the a glycophospholipid binding site. The chain crosses the membrane as a helical span at residues 395-415 (FLFTAAPAVAFLSGIGVYELT). Residues 416-424 (RRIKENKIR) lie on the Cytoplasmic side of the membrane. The helical transmembrane segment at 425–445 (ITSLGVVILLSSAFSLGEVYS) threads the bilayer. Over 446–743 (VKPFMNENWE…LDRGIVRVKN (298 aa)) the chain is Extracellular. An interacts with target acceptor peptide in protein substrate region spans residues 474-476 (WWD). Residues 474 to 478 (WWDWG) carry the WWDYG motif motif. Residues 526–533 (DILKFEAI) carry the DK motif motif.

It belongs to the STT3 family. Requires Mn(2+) as cofactor. Mg(2+) serves as cofactor.

It localises to the cell membrane. The catalysed reaction is an archaeal dolichyl phosphooligosaccharide + [protein]-L-asparagine = an archaeal dolichyl phosphate + a glycoprotein with the oligosaccharide chain attached by N-beta-D-glycosyl linkage to a protein L-asparagine.. Its pathway is protein modification; protein glycosylation. Oligosaccharyl transferase (OST) that catalyzes the initial transfer of a defined glycan (ManNAcXyl(2)GlcAMan(2)GalNAc in P.furiosus) from the lipid carrier dolichol-monophosphate to an asparagine residue within an Asn-X-Ser/Thr consensus motif in nascent polypeptide chains, the first step in protein N-glycosylation. This is Dolichyl-phosphooligosaccharide-protein glycotransferase 2 (aglB2) from Pyrococcus furiosus (strain ATCC 43587 / DSM 3638 / JCM 8422 / Vc1).